The chain runs to 194 residues: MNIILASASPRRKEILENTNVRFDIIKNEIDEIILEGETPKHLVMRLAFEKSMSVASEHNEDVVIGADTVVVLDNAILGKPKDESCARDMLKRLSGREHQVITGISLINLCEDKKVIDYVISNVKFKTLSEQDIEDYLKTNESFDKAGAYGIQGYGALLVEEIRGDYFNIVGLPISRLGDLLKKYFSINLFYGV.

Asp68 functions as the Proton acceptor in the catalytic mechanism.

Belongs to the Maf family. YhdE subfamily. It depends on a divalent metal cation as a cofactor.

It is found in the cytoplasm. The enzyme catalyses dTTP + H2O = dTMP + diphosphate + H(+). The catalysed reaction is UTP + H2O = UMP + diphosphate + H(+). Nucleoside triphosphate pyrophosphatase that hydrolyzes dTTP and UTP. May have a dual role in cell division arrest and in preventing the incorporation of modified nucleotides into cellular nucleic acids. This is dTTP/UTP pyrophosphatase from Clostridioides difficile (strain 630) (Peptoclostridium difficile).